Reading from the N-terminus, the 979-residue chain is Protein SMAX1-LIKE 6 (979 aa).

Residues 8-190 (ARECLTEEAA…PVTQLSSRFS (183 aa)) form the Clp R domain. Repeat regions lie at residues 12–86 (LTEE…LDRL) and 100–190 (VSNS…SRFS). The EAR motif lies at 833 to 837 (LDLNL).

Belongs to the ClpA/ClpB family. In terms of assembly, interacts with TPL/TPR in an EAR-motif dependent manner. Interacts with TPR3. Interacts with MAX2 and TPR2. Interacts with D14. The interaction with D14 occurs in the presence of (2'R) stereoisomers of strigolactones, but not (2'S) stereoisomers. Ubiquitinated upon strigolactone treatment. Probable proteolytic target of SCF(MAX2)-mediated stigolactone signaling. Detected in roots, seedlings and axillary branches. Expressed in the primary rosette buds and expanding leaves of adult rosettes, the vasculature of the hypocotyls, cotyledons, and mature roots, and in the midvein and petioles of young leaves.

It is found in the nucleus. Functionally, probable component of a transcriptional corepressor complex involved in branching control. Regulates cotyledon expansion and lateral root growth, but not germination or hypocotyl elongation. Promotes auxin transport and PIN1 accumulation in the stem and represses BRC1/TCP18 expression in axillary buds. This chain is Protein SMAX1-LIKE 6, found in Arabidopsis thaliana (Mouse-ear cress).